Reading from the N-terminus, the 72-residue chain is Delta-actitoxin-Avd2b 3 (72 aa).

The N-terminal stretch at Met1–Ala21 is a signal peptide. The propeptide occupies Asn22–Gly42. Disulfide bonds link Cys47/Cys62, Cys48/Cys56, and Cys50/Cys67.

It belongs to the sea anemone short toxin (type III) family.

The protein localises to the secreted. The protein resides in the nematocyst. Voltage-gated sodium channel (Nav) inhibitor. 1 uM completely inhibits insect voltage-gated sodium channel inactivation (DmNav1 from D.melanogaster). This is Delta-actitoxin-Avd2b 3 from Anemonia viridis (Snakelocks anemone).